Here is a 206-residue protein sequence, read N- to C-terminus: Imidazoleglycerol-phosphate dehydratase (206 aa).

The segment at 1–21 (MTTPSTAPTPAPRKAEVSRNT) is disordered.

This sequence belongs to the imidazoleglycerol-phosphate dehydratase family.

Its subcellular location is the cytoplasm. The enzyme catalyses D-erythro-1-(imidazol-4-yl)glycerol 3-phosphate = 3-(imidazol-4-yl)-2-oxopropyl phosphate + H2O. It functions in the pathway amino-acid biosynthesis; L-histidine biosynthesis; L-histidine from 5-phospho-alpha-D-ribose 1-diphosphate: step 6/9. This is Imidazoleglycerol-phosphate dehydratase from Polaromonas sp. (strain JS666 / ATCC BAA-500).